Consider the following 501-residue polypeptide: Probable cytosol aminopeptidase (501 aa).

Positions 257 and 262 each coordinate Mn(2+). Residue Lys-269 is part of the active site. Asp-281, Asp-341, and Glu-343 together coordinate Mn(2+). Arg-345 is an active-site residue.

Belongs to the peptidase M17 family. Requires Mn(2+) as cofactor.

It is found in the cytoplasm. It catalyses the reaction Release of an N-terminal amino acid, Xaa-|-Yaa-, in which Xaa is preferably Leu, but may be other amino acids including Pro although not Arg or Lys, and Yaa may be Pro. Amino acid amides and methyl esters are also readily hydrolyzed, but rates on arylamides are exceedingly low.. It carries out the reaction Release of an N-terminal amino acid, preferentially leucine, but not glutamic or aspartic acids.. Functionally, presumably involved in the processing and regular turnover of intracellular proteins. Catalyzes the removal of unsubstituted N-terminal amino acids from various peptides. The polypeptide is Probable cytosol aminopeptidase (Synechococcus sp. (strain RCC307)).